The primary structure comprises 482 residues: NADH-quinone oxidoreductase subunit D (482 aa).

A compositionally biased stretch (low complexity) spans 1–16; sequence MTTNTSTSSTTDDLTT. The segment at 1–48 is disordered; it reads MTTNTSTSSTTDDLTTGAPNGTGAPDGANGVGGPTGTVGGPGEHPAYE. The span at 29–42 shows a compositional bias: gly residues; that stretch reads NGVGGPTGTVGGPG.

The protein belongs to the complex I 49 kDa subunit family. NDH-1 is composed of 14 different subunits. Subunits NuoB, C, D, E, F, and G constitute the peripheral sector of the complex.

Its subcellular location is the cell membrane. It carries out the reaction a quinone + NADH + 5 H(+)(in) = a quinol + NAD(+) + 4 H(+)(out). NDH-1 shuttles electrons from NADH, via FMN and iron-sulfur (Fe-S) centers, to quinones in the respiratory chain. The immediate electron acceptor for the enzyme in this species is believed to be a menaquinone. Couples the redox reaction to proton translocation (for every two electrons transferred, four hydrogen ions are translocated across the cytoplasmic membrane), and thus conserves the redox energy in a proton gradient. In Frankia casuarinae (strain DSM 45818 / CECT 9043 / HFP020203 / CcI3), this protein is NADH-quinone oxidoreductase subunit D.